A 405-amino-acid chain; its full sequence is Neisseria adhesin A (405 aa).

The N-terminal stretch at 1-23 (MKHFPSKVLTTAILATFCSGALA) is a signal peptide. Positions 24–87 (ATNDDDVKKA…ADDFKGLGLK (64 aa)) are head domain. Coiled-coil stretches lie at residues 87 to 170 (KKVV…KLEA) and 181 to 329 (AFND…LRKE). Residues 88-350 (KVVTNLTKTV…SGLFQPYNVG (263 aa)) form a coiled stalk domain region. The segment at 312–350 (HDTRLNGLDKTVSDLRKETRQGLAEQAALSGLFQPYNVG) is outer membrane translocation of the passenger domain. Transmembrane regions (beta stranded) follow at residues 350 to 360 (GRFNVTAAVGG), 364 to 375 (ESAVAIGTGFRF), 382 to 388 (KAGVAVG), and 394 to 405 (SAAYHVGVNYEW). The translocator domain stretch occupies residues 351 to 405 (RFNVTAAVGGYKSESAVAIGTGFRFTENFAAKAGVAVGTSSGSSAAYHVGVNYEW).

It belongs to the autotransporter-2 (AT-2) (TC 1.B.40) family. The non-membrane anchored protein (residues 24-350) probably forms a homotrimer; it is assumed the mature protein forms trimers in situ. The mature protein without the membrane-targeting segment (residues 24-350) binds to human heat shock 90 beta protein (HSP90AB1) both in vitro and when incubated with human monocytes. A subsequent paper showed binding of the same fragment in epithelial cells to both HSP90AA1 and HSP90AB1; in vitro the interaction is stabilized by ADP and the Hsp90 inhibitor 17-AAG (17-N-allylamino-17-demethoxygeldanamycin), in vitro and in vivo both interactions are inhibited by ATP. Binds human oxidized low-density lipoprotein receptor 1 (LOX-1, OLR1) in protein microarrays, in solution and when LOX-1 is expressed on the cell surface. Binds via the head and the beginning of the coiled stalk (residues 24-170); binding can be abrogated by monoclonal antibodies against those specific regions of NadA. Other potential binding partners were identified but not characterized in the same study. Forms high molecular weight oligomers in whole cell extracts that are not disrupted by boiling in SDS buffer.

It is found in the cell outer membrane. The protein localises to the cell surface. Adheres to and induces bacterial uptake by human epithelial cells in a microfilament-dependent process. Binding is reduced by pronase treatment, suggesting there is a protein receptor on the human cells. Possible human protein receptors include integrin beta-1 (ITGB1) and oxidized low-density lipoprotein receptor 1 (OLR1). Binds to extracellular human Hsp90 (preferentially the beta isoform, HSP90AB1) on monocytes, binding stimulates monocytes in a TLR4-dependent fashion, polymixin B, which binds NadA, blocks the activation. Hsp90 is probably not the first receptor on human monocytes. Non-membrane anchored protein (residues 24-350) is internalized into human epithelial cells by hijacking the endosome recycling pathway and may be recycled back to the cell surface, which might aid transcellular trafficking of the bacteria. A bacterial cell surface protein; antisera against this protein induce complement-mediated killing of this and other strains. This chain is Neisseria adhesin A, found in Neisseria meningitidis serogroup B.